A 192-amino-acid chain; its full sequence is Elongation factor P (192 aa).

K38 is modified (N6-(3,6-diaminohexanoyl)-5-hydroxylysine).

Belongs to the elongation factor P family. Post-translationally, may be beta-lysylated on the epsilon-amino group of Lys-38 by the combined action of EpmA and EpmB, and then hydroxylated on the C5 position of the same residue by EpmC (if this protein is present). Lysylation is critical for the stimulatory effect of EF-P on peptide-bond formation. The lysylation moiety may extend toward the peptidyltransferase center and stabilize the terminal 3-CCA end of the tRNA. Hydroxylation of the C5 position on Lys-38 may allow additional potential stabilizing hydrogen-bond interactions with the P-tRNA.

Its subcellular location is the cytoplasm. The protein operates within protein biosynthesis; polypeptide chain elongation. Involved in peptide bond synthesis. Alleviates ribosome stalling that occurs when 3 or more consecutive Pro residues or the sequence PPG is present in a protein, possibly by augmenting the peptidyl transferase activity of the ribosome. Modification of Lys-38 is required for alleviation. This Mannheimia succiniciproducens (strain KCTC 0769BP / MBEL55E) protein is Elongation factor P.